Reading from the N-terminus, the 482-residue chain is G2/mitotic-specific cyclin cdc13 (482 aa).

3 stretches are compositionally biased toward polar residues: residues 35–55, 78–92, and 118–140; these read LHSS…STNV, SKNT…SVST, and SVFN…SVST. The segment at 35–140 is disordered; it reads LHSSENSLVN…LSTKSHSVST (106 aa). The 127-residue stretch at 206 to 332 folds into the Cyclin N-terminal domain; the sequence is DIFEYLNELE…ILRVLEFNLA (127 aa).

The protein belongs to the cyclin family. Cyclin AB subfamily. In terms of assembly, interacts with cdc2. Interacts with rum1. Associates with microtubules. Also interacts with cdc11.

The protein localises to the nucleus. It localises to the cytoplasm. The protein resides in the cytoskeleton. It is found in the microtubule organizing center. Its subcellular location is the spindle pole body. Its function is as follows. Essential for the control of the cell cycle at the G2/M (mitosis) transition. Interacts with the cdc2 protein kinase to form MPF. G2/M cyclins accumulate steadily during G2 and are abruptly destroyed at mitosis. Involved in the reorganization of the cytoskeleton on transition from G2 to mitosis. Association with rum1 promotes its proteolysis during G1. Also essential for initiation of meiosis II. The protein is G2/mitotic-specific cyclin cdc13 of Schizosaccharomyces pombe (strain 972 / ATCC 24843) (Fission yeast).